The sequence spans 274 residues: Bis(5'-nucleosyl)-tetraphosphatase, symmetrical (274 aa).

This sequence belongs to the Ap4A hydrolase family.

The enzyme catalyses P(1),P(4)-bis(5'-adenosyl) tetraphosphate + H2O = 2 ADP + 2 H(+). In terms of biological role, hydrolyzes diadenosine 5',5'''-P1,P4-tetraphosphate to yield ADP. The chain is Bis(5'-nucleosyl)-tetraphosphatase, symmetrical from Shewanella loihica (strain ATCC BAA-1088 / PV-4).